Consider the following 99-residue polypeptide: Mu-hexatoxin-Mg1c (99 aa).

3 cysteine pairs are disulfide-bonded: Cys61–Cys75, Cys68–Cys80, and Cys74–Cys94.

Belongs to the neurotoxin 14 (magi-1) family. 09 (magi-1) subfamily. In terms of tissue distribution, expressed by the venom gland.

It localises to the secreted. Inhibits voltage-gated sodium channels by binding to site 3. Insecticidal neurotoxin. In Macrothele gigas (Japanese funnel web spider), this protein is Mu-hexatoxin-Mg1c.